A 425-amino-acid chain; its full sequence is Succinyl-diaminopimelate desuccinylase (425 aa).

His-96 serves as a coordination point for Zn(2+). Residue Asp-98 is part of the active site. Asp-129 contributes to the Zn(2+) binding site. Glu-163 functions as the Proton acceptor in the catalytic mechanism. Residues Glu-164, Glu-192, and His-378 each contribute to the Zn(2+) site.

Belongs to the peptidase M20A family. DapE subfamily. As to quaternary structure, homodimer. Zn(2+) is required as a cofactor. Requires Co(2+) as cofactor.

The catalysed reaction is N-succinyl-(2S,6S)-2,6-diaminopimelate + H2O = (2S,6S)-2,6-diaminopimelate + succinate. It functions in the pathway amino-acid biosynthesis; L-lysine biosynthesis via DAP pathway; LL-2,6-diaminopimelate from (S)-tetrahydrodipicolinate (succinylase route): step 3/3. Functionally, catalyzes the hydrolysis of N-succinyl-L,L-diaminopimelic acid (SDAP), forming succinate and LL-2,6-diaminopimelate (DAP), an intermediate involved in the bacterial biosynthesis of lysine and meso-diaminopimelic acid, an essential component of bacterial cell walls. The protein is Succinyl-diaminopimelate desuccinylase of Polaromonas sp. (strain JS666 / ATCC BAA-500).